The chain runs to 154 residues: Superoxide dismutase [Cu-Zn] (154 aa).

Cu cation contacts are provided by His-45, His-47, and His-62. The cysteines at positions 56 and 146 are disulfide-linked. Zn(2+)-binding residues include His-62, His-70, His-79, and Asp-82. His-120 contacts Cu cation.

The protein belongs to the Cu-Zn superoxide dismutase family. In terms of assembly, homodimer. Cu cation is required as a cofactor. It depends on Zn(2+) as a cofactor.

It localises to the cytoplasm. It carries out the reaction 2 superoxide + 2 H(+) = H2O2 + O2. Its function is as follows. Destroys radicals which are normally produced within the cells and which are toxic to biological systems. In Bombyx mori (Silk moth), this protein is Superoxide dismutase [Cu-Zn].